The sequence spans 238 residues: Oxidoreductase dmxR7 (238 aa).

It belongs to the avfA family.

It functions in the pathway secondary metabolite biosynthesis. Functionally, oxidoreductase; part of the gene cluster that mediates the biosynthesis of the dimeric xanthones cryptosporioptides. The pathway begins with the synthesis of atrochrysone thioester by the polyketide synthase dmx-nrPKS. The atrochrysone carboxyl ACP thioesterase dmxR1 then breaks the thioester bond and releases the atrochrysone carboxylic acid from dmx-nrPKS. Atrochrysone carboxylic acid is decarboxylated by the decarboxylase dmxR15, and oxidized by the anthrone oxygenase dmxR16 to yield emodin. Emodin is then reduced to emodin hydroquinone by the oxidoreductase dmxR7. A-ring reduction by the short chain dehydrogenase dmxR18, dehydration by the scytalone dehydratase-like protein dmxR17 and probable spontaneous re-oxidation, results in overall deoxygenation to chrysophanol. Baeyer-Villiger oxidation by the Baeyer-Villiger monooxygenase (BVMO) dmxR6 then yields monodictylactone in equilibrium with monodictyphenone. In the case of the cryptosporioptides biosynthesis, monodictylactone is reduced at C-12 to an alcohol (by the short chain dehydrogenases dmxR12 or dmxR8) and hydroxylated at C-5 by dmxR9, yielding the electron-rich aromatic which could eliminate H(2)O to form the ortho-quinonemethide, followed by tautomerisation to paraquinone and complete the formal reduction to produce the 10-methylgroup. Conjugate addition of C-4a-OH to the resulting paraquinone by the monooxygenase dmxR10 then gives cyclohexadienone, which is then reduced at C-5 by the short chain dehydrogenase dmxR3 to give the dihydroxanthone. The 6,7-epoxide in the cryptosporioptides could be introduced by the cytochrome P450 monooxygenase dmxL3. The highly reducing PKS dmxL2 manufactures butyrate, which is further carboxylated by dmxL1 to form ethylmalonate. It is not yet clear whether the carboxylation occurs while the butyrate is attached to the ACP of dmxL2, but this unusual fungal metabolite could then be esterified to O-5 by the O-acetyltransferase dmxR13. Finally, dimerization performed by dmxR5 gives the observed dimers cryptosporioptides A, B and C as the final products of the pathway. This chain is Oxidoreductase dmxR7, found in Cryptosporiopsis sp. (strain 8999).